We begin with the raw amino-acid sequence, 580 residues long: Mucolipin-1 (580 aa).

The interval 1 to 38 is disordered; it reads MTAPAGPRGSETERLLTPNPGYGTQAGPSPAPPTPPEE. The Cytoplasmic portion of the chain corresponds to 1 to 65; that stretch reads MTAPAGPRGS…FRAKGRKPCK (65 aa). A Phosphoserine modification is found at Ser-10. Positions 11–16 match the Dileucine motif; mediates targeting to lysosomes motif; it reads ETERLL. Residues 42 to 62 are interaction with phosphoinositides; the sequence is RRRLKYFFMSPCDKFRAKGRK. The chain crosses the membrane as a helical span at residues 66-86; sequence LMLQVVKILVVTVQLILFGLS. Residues 87-298 lie on the Extracellular side of the membrane; that stretch reads NQLAVTFREE…VFQHGDNSFR (212 aa). The extracellular/lumenal pore loop stretch occupies residues 107 to 121; sequence LGYSDGADDTFAAYT. The cysteines at positions 166 and 192 are disulfide-linked. Asn-230 carries N-linked (GlcNAc...) asparagine glycosylation. Cysteines 253 and 284 form a disulfide. Residues 299–321 traverse the membrane as a helical segment; it reads LLFDVVVILTCSLSFLLCARSLL. The Cytoplasmic portion of the chain corresponds to 322-350; it reads RGFLLQNEFVGFMWRQRGRVISLWERLEF. Residues 351–371 form a helical membrane-spanning segment; sequence VNGWYILLVTSDVLTISGTIM. The Extracellular segment spans residues 372–382; the sequence is KIGIEAKNLAS. A helical transmembrane segment spans residues 383–405; that stretch reads YDVCSILLGTSTLLVWVGVIRYL. Topologically, residues 406-427 are cytoplasmic; it reads TFFHNYNILIATLRVALPSVMR. A helical membrane pass occupies residues 428–448; it reads FCCCVAVIYLGYCFCGWIVLG. The Extracellular portion of the chain corresponds to 449 to 456; the sequence is PYHVKFRS. Residues 457-477 constitute an intramembrane region (pore-forming); sequence LSMVSECLFSLINGDDMFVTF. A Selectivity filter motif is present at residues 469-474; sequence NGDDMF. Over 478-491 the chain is Extracellular; the sequence is AAMQAQQGRSSLVW. Residues 492 to 513 traverse the membrane as a helical segment; it reads LFSQLYLYSFISLFIYMVLSLF. Residues 514 to 580 lie on the Cytoplasmic side of the membrane; it reads IALITGAYDT…PSEEHSLLVN (67 aa). Residues Ser-557 and Ser-559 each carry the phosphoserine; by PAK modification. Residues 565–567 form a required for palmitoylation and association with membranes region; the sequence is CCC. Residues 573 to 578 carry the Dileucine internalization motif; mediates AP2 complex-dependent internalization motif; the sequence is EEHSLL.

Belongs to the transient receptor (TC 1.A.4) family. Polycystin subfamily. MCOLN1 sub-subfamily. In terms of assembly, homotetramer. Homooligomer. Can heterooligomerize with MCOLN2 or MCOLN3; heteromeric assemblies have different channel properties as compared to the respective homooligomers and may be tissue-specific. Interacts with PDCD6. Interacts with TMEM163. Interacts with LAPTM4B. Palmitoylated; involved in association with membranes. In terms of processing, phosphorylation by PKA inhibits channel activity. Dephosphorylation increases activity. Post-translationally, proteolytically cleaved probably involving multiple lysosomal proteases including cathepsin B; inhibits lysosomal channel activity. As to expression, widely expressed in adult and fetal tissues.

It is found in the late endosome membrane. Its subcellular location is the lysosome membrane. The protein localises to the cytoplasmic vesicle membrane. The protein resides in the cell projection. It localises to the phagocytic cup. It is found in the cytoplasmic vesicle. Its subcellular location is the phagosome membrane. The protein localises to the cell membrane. The catalysed reaction is Ca(2+)(in) = Ca(2+)(out). It carries out the reaction Fe(2+)(in) = Fe(2+)(out). It catalyses the reaction Mg(2+)(in) = Mg(2+)(out). The enzyme catalyses K(+)(in) = K(+)(out). The catalysed reaction is Na(+)(in) = Na(+)(out). Its activity is regulated as follows. Channel activity is controlled by multiple regulatory mechanisms in different subcellular compartments. Channel function is transiently modulated by changes in Ca(2+) in a pH-dependent manner; pH changes modify the aggregation state of unitary channels; a negative cooperativity between extracellular/lumenal Ca(2+) and H(+) is suggested. Regulated by phosphoinositides in a compartment-specific manner: in lysosomes activated by PtdIns(3,5)P2 (Phosphatidylinositol 3,5-bisphosphate) and at the plasma membrane inhibited by PtdIns(4,5)P2 (Phosphatidylinositol 4,5-bisphosphate). Its function is as follows. Nonselective cation channel probably playing a role in the regulation of membrane trafficking events and of metal homeostasis. Acts as a Ca(2+)-permeable cation channel with inwardly rectifying activity. Proposed to play a major role in Ca(2+) release from late endosome and lysosome vesicles to the cytoplasm, which is important for many lysosome-dependent cellular events, including the fusion and trafficking of these organelles, exocytosis and autophagy. Required for efficient uptake of large particles in macrophages in which Ca(2+) release from the lysosomes triggers lysosomal exocytosis. May also play a role in phagosome-lysosome fusion. Involved in lactosylceramide trafficking indicative for a role in the regulation of late endocytic membrane fusion/fission events. By mediating lysosomal Ca(2+) release is involved in regulation of mTORC1 signaling and in mTOR/TFEB-dependent lysosomal adaptation to environmental cues such as nutrient levels. Seems to act as lysosomal active oxygen species (ROS) sensor involved in ROS-induced TFEB activation and autophagy. Also functions as a Fe(2+) permeable channel in late endosomes and lysosomes. Also permeable to Mg(2+), Na(+). K(+) and Cs(+). Proposed to play a role in zinc homeostasis probably implicating its association with TMEM163 In adaptive immunity, TRPML2 and TRPML1 may play redundant roles in the function of the specialized lysosomes of B cells. Functionally, may contribute to cellular lipase activity within the late endosomal pathway or at the cell surface which may be involved in processes of membrane reshaping and vesiculation, especially the growth of tubular structures. However, it is not known, whether it conveys the enzymatic activity directly, or merely facilitates the activity of an associated phospholipase. The polypeptide is Mucolipin-1 (Homo sapiens (Human)).